We begin with the raw amino-acid sequence, 165 residues long: Phosphopantetheine adenylyltransferase (165 aa).

Thr11 contributes to the substrate binding site. ATP is bound by residues 11 to 12 (TF) and His19. Residues Lys43, Val75, and Arg89 each contribute to the substrate site. Residues 90–92 (GLR), Glu100, and 125–131 (YQFISST) each bind ATP.

It belongs to the bacterial CoaD family. Homohexamer. It depends on Mg(2+) as a cofactor.

It is found in the cytoplasm. It catalyses the reaction (R)-4'-phosphopantetheine + ATP + H(+) = 3'-dephospho-CoA + diphosphate. Its pathway is cofactor biosynthesis; coenzyme A biosynthesis; CoA from (R)-pantothenate: step 4/5. Its function is as follows. Reversibly transfers an adenylyl group from ATP to 4'-phosphopantetheine, yielding dephospho-CoA (dPCoA) and pyrophosphate. The protein is Phosphopantetheine adenylyltransferase of Acidovorax ebreus (strain TPSY) (Diaphorobacter sp. (strain TPSY)).